Here is a 236-residue protein sequence, read N- to C-terminus: Large ribosomal subunit protein uL1 (236 aa).

This sequence belongs to the universal ribosomal protein uL1 family. Part of the 50S ribosomal subunit.

In terms of biological role, binds directly to 23S rRNA. The L1 stalk is quite mobile in the ribosome, and is involved in E site tRNA release. Its function is as follows. Protein L1 is also a translational repressor protein, it controls the translation of the L11 operon by binding to its mRNA. The polypeptide is Large ribosomal subunit protein uL1 (Sorangium cellulosum (strain So ce56) (Polyangium cellulosum (strain So ce56))).